The sequence spans 528 residues: Ankyrin repeat and death domain-containing protein 1B (528 aa).

10 ANK repeats span residues 67–96 (PNERSFQNAAKSNNLDLMEKLFEKKVNINV), 100–129 (MNRTALHFAVGRNHLSAVDFLLKHKARVDV), 133–162 (HGLTVIHLAAWSGSLEVMLMLVKAGADQRA), 166–197 (DGMSALHFATQSNHVRIVEYLIQDLHLKDLNQ), 201–230 (KGRKPFLLAAERGHVEMIEKLTFLNLHTSE), 234–263 (GGNTALHLAAKHGHSPAVQVLLAQWQDINE), 267–296 (LNISSLQIATRNGHASLVNFLLSENVDLHQ), 300–329 (PKESPLHLVVINNHITVVNSLLSAQHDIDI), 333–362 (KQQTPLHVAADRGNVELVETLLKAGCDLKA), and 366–395 (QGKTALAVASRSNHSLVVGMLIKAERYYAW). In terms of domain architecture, Death spans 427–515 (TLLWDLAYHQ…KLAEKTRHFK (89 aa)).

The polypeptide is Ankyrin repeat and death domain-containing protein 1B (ANKDD1B) (Homo sapiens (Human)).